Consider the following 1102-residue polypeptide: Voltage-gated delayed rectifier potassium channel KCNH8 (1102 aa).

Topologically, residues 1–225 (MPVMKGLLAP…HFSTFKAGWD (225 aa)) are cytoplasmic. Residues 18-90 (IATRFDGTHS…LQIEKSLEEK (73 aa)) form the PAS domain. Residues 93–145 (FKGEIMFYKKNGAPFWCLLDIVPIKNEKGDVVLFLASFKDITDTKVKITSEDK) form the PAC domain. Positions 142–151 (SEDKKEDRTK) are enriched in basic and acidic residues. A disordered region spans residues 142–162 (SEDKKEDRTKGRSRAGSHFDS). The chain crosses the membrane as a helical span at residues 226-246 (WLILLATFYVAVTVPYNVCFI). The Extracellular portion of the chain corresponds to 247 to 255 (GNEDLSTTR). A helical transmembrane segment spans residues 256–276 (STTVSDIAVEILFIIDIILNF). Residues 277–298 (RTTYVSKSGQVIFEARSICIHY) are Cytoplasmic-facing. A helical transmembrane segment spans residues 299-319 (VTTWFIIDLIAALPFDLLYAF). N-linked (GlcNAc...) asparagine glycosylation is present at Asn320. Over 320–327 (NVTVVSLV) the chain is Extracellular. A helical; Voltage-sensor membrane pass occupies residues 328–348 (HLLKTVRLLRLLRLLQKLDRY). The Cytoplasmic portion of the chain corresponds to 349 to 357 (SQHSTIVLT). A helical membrane pass occupies residues 358-378 (LLMSMFALLAHWMACIWYVIG). Residues 379–419 (KMEREDNSLLKWEVGWLHELGKRLESPYYGNNTLGGPSIRS) lie on the Extracellular side of the membrane. Asn409 is a glycosylation site (N-linked (GlcNAc...) asparagine). The pore-forming intramembrane region spans 420–440 (AYIAALYFTLSSLTSVGFGNV). Residues 434–439 (SVGFGN) carry the Selectivity filter motif. Residues 441 to 448 (SANTDAEK) lie on the Extracellular side of the membrane. The helical transmembrane segment at 449–469 (IFSICTMLIGALMHALVFGNV) threads the bilayer. Topologically, residues 470–1102 (TAIIQRMYSR…DVKDSKAINV (633 aa)) are cytoplasmic. The cNMP-binding domain stretch occupies residues 551 to 668 (LFECASRGCL…HKFVEDIQHD (118 aa)). Over residues 684 to 693 (RLSNKSTVSQ) the composition is skewed to polar residues. Disordered stretches follow at residues 684–743 (RLSN…KKTG), 764–841 (HSPI…PEPR), and 960–991 (LVGS…YSPS). Acidic residues predominate over residues 710–723 (VEDEEEEEVEEEET). A compositionally biased stretch (polar residues) spans 724-737 (TSLSPIYTRGSSVS). Residues 968–984 (TEAHEQNPADSELHHSP) show a composition bias toward basic and acidic residues.

This sequence belongs to the potassium channel family. H (Eag) (TC 1.A.1.20) subfamily. Kv12.1/KCNH8 sub-subfamily. In terms of assembly, the potassium channel is probably composed of a homo- or heterotetrameric complex of pore-forming alpha subunits that can associate with modulating beta subunits.

The protein resides in the membrane. It catalyses the reaction K(+)(in) = K(+)(out). In terms of biological role, pore-forming (alpha) subunit of a voltage-gated delayed rectifier potassium channel that mediates outward-rectifying potassium currents. Elicits a slowly activating, non-inactivating and slowly deactivation outwards potassium current at depolarizating voltages from -30 mV to +50mV. Shows no obvious change in the activation rate from different holding potentials. Activation is strongly dependent on the pH of the external solution. The chain is Voltage-gated delayed rectifier potassium channel KCNH8 from Mus musculus (Mouse).